The chain runs to 399 residues: CCA-adding enzyme (399 aa).

2 residues coordinate ATP: Gly-32 and Arg-35. Gly-32 and Arg-35 together coordinate CTP. Mg(2+)-binding residues include Asp-45 and Asp-47. Residues Arg-116, Asp-159, Arg-162, Arg-165, and Arg-168 each coordinate ATP. 5 residues coordinate CTP: Arg-116, Asp-159, Arg-162, Arg-165, and Arg-168.

It belongs to the tRNA nucleotidyltransferase/poly(A) polymerase family. Bacterial CCA-adding enzyme type 3 subfamily. As to quaternary structure, homodimer. The cofactor is Mg(2+).

It carries out the reaction a tRNA precursor + 2 CTP + ATP = a tRNA with a 3' CCA end + 3 diphosphate. It catalyses the reaction a tRNA with a 3' CCA end + 2 CTP + ATP = a tRNA with a 3' CCACCA end + 3 diphosphate. Functionally, catalyzes the addition and repair of the essential 3'-terminal CCA sequence in tRNAs without using a nucleic acid template. Adds these three nucleotides in the order of C, C, and A to the tRNA nucleotide-73, using CTP and ATP as substrates and producing inorganic pyrophosphate. tRNA 3'-terminal CCA addition is required both for tRNA processing and repair. Also involved in tRNA surveillance by mediating tandem CCA addition to generate a CCACCA at the 3' terminus of unstable tRNAs. While stable tRNAs receive only 3'-terminal CCA, unstable tRNAs are marked with CCACCA and rapidly degraded. The protein is CCA-adding enzyme of Streptococcus pneumoniae serotype 4 (strain ATCC BAA-334 / TIGR4).